A 103-amino-acid chain; its full sequence is Small ribosomal subunit protein uS10 (103 aa).

It belongs to the universal ribosomal protein uS10 family. Part of the 30S ribosomal subunit.

Functionally, involved in the binding of tRNA to the ribosomes. In Shewanella halifaxensis (strain HAW-EB4), this protein is Small ribosomal subunit protein uS10.